We begin with the raw amino-acid sequence, 148 residues long: MKIWVDADAAPVAIKEILYKLADKRKVETIFVANRVLKLPRSQHLHFRLVAAGADVADGEIVRLLKKGDLVITADIPLASLVVEKGGTALNPRGELYTKENIAERLSSRDFMQELRDGGVETGGAPPFSAKDKQRFANAIDRILARLR.

It belongs to the UPF0178 family.

This is UPF0178 protein DP1304 from Desulfotalea psychrophila (strain LSv54 / DSM 12343).